A 327-amino-acid chain; its full sequence is MKLPAFLSLLALVLLEAGTASLPKERKRRDEMHGEGDSYVVLGNYVLGPDNYDEVIDLSDYEGLMDYGDQLPEAKVTNLAPPTGISSAQSTMTPRTLSLKPTMIRPTELGVLGSPNSHGLPTCLICVCLGSSVYCDDADLENIPPLPKTTTYLYARFNRIRRIRAGDFKGLTKLKRIDLSSNSISSIDDDALRLLPALQDLILPENQLAALPALPPAIEVLDARHNQLQSSGIQPEALRALEKLQFLYLADNLLDSIPGPLPPSLRSLHLQNNLIETMQTDAFCDPEEHKHSRRWLEDIRLDGNPINLGLFPSAYFCLPRLPTGHCC.

The signal sequence occupies residues 1 to 19 (MKLPAFLSLLALVLLEAGT). A sulfotyrosine mark is found at tyrosine 61 and tyrosine 67. The LRRNT domain occupies 111-148 (VLGSPNSHGLPTCLICVCLGSSVYCDDADLENIPPLPK). 7 LRR repeats span residues 149 to 170 (TTTYLYARFNRIRRIRAGDFKG), 173 to 194 (KLKRIDLSSNSISSIDDDALRL), 197 to 218 (ALQDLILPENQLAALPALPPAI), 219 to 237 (EVLDARHNQLQSSGIQPEA), 243 to 263 (KLQFLYLADNLLDSIPGPLPP), 264 to 285 (SLRSLHLQNNLIETMQTDAFCD), and 295 to 315 (WLEDIRLDGNPINLGLFPSAY). Cysteine 284 and cysteine 317 form a disulfide bridge.

This sequence belongs to the small leucine-rich proteoglycan (SLRP) family. SLRP class III subfamily. In terms of assembly, homodimer. O-glycosylated. Post-translationally, proteolytically cleaved by MMP1, MMP2, MMP3, MMP7, MMP8, MMP9, ADAMTS4, and ADAMTS5. Proteolytically cleaved by MMP13. In terms of processing, sulfated on tyrosine residues. Ocular tissues, cartilage, ligament, skin, muscle and testes.

Its subcellular location is the secreted. The protein resides in the extracellular space. It localises to the extracellular matrix. In terms of biological role, inhibits angiogenesis in the vitreous humor of the eye, and therefore represses neovascularization. Binds collagen fibrils. May be involved in collagen fiber organization via regulation of other members of the small leucine-rich repeat proteoglycan superfamily. The protein is Opticin (OPTC) of Canis lupus familiaris (Dog).